Reading from the N-terminus, the 244-residue chain is Phosphoadenosine 5'-phosphosulfate reductase (244 aa).

Cysteine 239 functions as the Nucleophile; cysteine thiosulfonate intermediate in the catalytic mechanism.

This sequence belongs to the PAPS reductase family. CysH subfamily.

It is found in the cytoplasm. It catalyses the reaction [thioredoxin]-disulfide + sulfite + adenosine 3',5'-bisphosphate + 2 H(+) = [thioredoxin]-dithiol + 3'-phosphoadenylyl sulfate. It participates in sulfur metabolism; hydrogen sulfide biosynthesis; sulfite from sulfate: step 3/3. Functionally, catalyzes the formation of sulfite from phosphoadenosine 5'-phosphosulfate (PAPS) using thioredoxin as an electron donor. This chain is Phosphoadenosine 5'-phosphosulfate reductase, found in Pectobacterium carotovorum subsp. carotovorum (strain PC1).